We begin with the raw amino-acid sequence, 401 residues long: Argininosuccinate synthase (401 aa).

8 to 16 (AYSGGLDTS) contacts ATP. Tyr-87 serves as a coordination point for L-citrulline. Residue Gly-117 coordinates ATP. The L-aspartate site is built by Thr-119, Asn-123, and Asp-124. L-citrulline is bound at residue Asn-123. Residues Arg-127, Ser-175, Glu-259, and Tyr-271 each contribute to the L-citrulline site.

The protein belongs to the argininosuccinate synthase family. Type 1 subfamily. As to quaternary structure, homotetramer.

It is found in the cytoplasm. It catalyses the reaction L-citrulline + L-aspartate + ATP = 2-(N(omega)-L-arginino)succinate + AMP + diphosphate + H(+). It participates in amino-acid biosynthesis; L-arginine biosynthesis; L-arginine from L-ornithine and carbamoyl phosphate: step 2/3. The polypeptide is Argininosuccinate synthase (Corynebacterium efficiens (strain DSM 44549 / YS-314 / AJ 12310 / JCM 11189 / NBRC 100395)).